Here is a 239-residue protein sequence, read N- to C-terminus: tRNA (guanine-N(1)-)-methyltransferase (239 aa).

S-adenosyl-L-methionine is bound by residues glycine 110 and 129–134; that span reads LGDFVL.

Belongs to the RNA methyltransferase TrmD family. Homodimer.

Its subcellular location is the cytoplasm. It catalyses the reaction guanosine(37) in tRNA + S-adenosyl-L-methionine = N(1)-methylguanosine(37) in tRNA + S-adenosyl-L-homocysteine + H(+). In terms of biological role, specifically methylates guanosine-37 in various tRNAs. The sequence is that of tRNA (guanine-N(1)-)-methyltransferase from Clostridium beijerinckii (strain ATCC 51743 / NCIMB 8052) (Clostridium acetobutylicum).